The following is a 541-amino-acid chain: Tyrosine-protein kinase Yes (541 aa).

The N-myristoyl glycine moiety is linked to residue glycine 2. The S-palmitoyl cysteine; in membrane form moiety is linked to residue cysteine 3. Tyrosine 32 bears the Phosphotyrosine mark. In terms of domain architecture, SH3 spans 89–150 (GGVTIFVALY…PSNYVVPADS (62 aa)). The region spanning 156-253 (WYFGKMGRKD…GLCHKLTTVC (98 aa)) is the SH2 domain. The 254-residue stretch at 275 to 528 (LRLEVKLGQG…YIQSFLEDYF (254 aa)) folds into the Protein kinase domain. ATP contacts are provided by residues 281-289 (LGQGCFGEV) and lysine 303. Tyrosine 334 and tyrosine 343 each carry phosphotyrosine. The active-site Proton acceptor is the aspartate 394. At tyrosine 424 the chain carries Phosphotyrosine; by autocatalysis. Tyrosine 535 carries the phosphotyrosine modification.

This sequence belongs to the protein kinase superfamily. Tyr protein kinase family. SRC subfamily. In terms of assembly, interacts with YAP1. Interacts with FASLG. Interacts with CTNND1; this interaction allows YES1-mediated activation of FYN and FER and subsequent phosphorylation of CTNND1. Interacts with CSF1R. Interacts with IL6ST/gp130. Interacts with SCRIB, when YES1 is in a closed conformation; the interaction facilitates YES1 autophosphorylation. In terms of processing, phosphorylated. Phosphorylation by CSK on the C-terminal tail maintains the enzyme in an inactive state. Autophosphorylation at Tyr-424 maintains enzyme activity by blocking CSK-mediated inhibition. Palmitoylation at Cys-3 promotes membrane localization.

Its subcellular location is the cell membrane. It is found in the cytoplasm. The protein resides in the cytoskeleton. It localises to the microtubule organizing center. The protein localises to the centrosome. Its subcellular location is the cytosol. It is found in the cell junction. The catalysed reaction is L-tyrosyl-[protein] + ATP = O-phospho-L-tyrosyl-[protein] + ADP + H(+). In terms of biological role, non-receptor protein tyrosine kinase that is involved in the regulation of cell growth and survival, apoptosis, cell-cell adhesion, cytoskeleton remodeling, and differentiation. Stimulation by receptor tyrosine kinases (RTKs) including EGFR, PDGFR, CSF1R and FGFR leads to recruitment of YES1 to the phosphorylated receptor, and activation and phosphorylation of downstream substrates. Upon EGFR activation, promotes the phosphorylation of PARD3 to favor epithelial tight junction assembly. Participates in the phosphorylation of specific junctional components such as CTNND1 by stimulating the FYN and FER tyrosine kinases at cell-cell contacts. Upon T-cell stimulation by CXCL12, phosphorylates collapsin response mediator protein 2/DPYSL2 and induces T-cell migration. Participates in CD95L/FASLG signaling pathway and mediates AKT-mediated cell migration. Plays a role in cell cycle progression by phosphorylating the cyclin dependent kinase 4/CDK4 thus regulating the G1 phase. Also involved in G2/M progression and cytokinesis. Catalyzes phosphorylation of organic cation transporter OCT2 which induces its transport activity. This chain is Tyrosine-protein kinase Yes (Yes1), found in Mus musculus (Mouse).